Reading from the N-terminus, the 514-residue chain is 2-isopropylmalate synthase (514 aa).

A Pyruvate carboxyltransferase domain is found at 8-270; sequence IRIFDTTLRD…DCGVVTEQLF (263 aa). 4 residues coordinate Mn(2+): aspartate 17, histidine 205, histidine 207, and asparagine 241. The tract at residues 394–514 is regulatory domain; the sequence is RLVNLSVQCS…KEEEQEKEGI (121 aa).

Belongs to the alpha-IPM synthase/homocitrate synthase family. LeuA type 1 subfamily. As to quaternary structure, homodimer. The cofactor is Mn(2+).

Its subcellular location is the cytoplasm. It carries out the reaction 3-methyl-2-oxobutanoate + acetyl-CoA + H2O = (2S)-2-isopropylmalate + CoA + H(+). The protein operates within amino-acid biosynthesis; L-leucine biosynthesis; L-leucine from 3-methyl-2-oxobutanoate: step 1/4. In terms of biological role, catalyzes the condensation of the acetyl group of acetyl-CoA with 3-methyl-2-oxobutanoate (2-ketoisovalerate) to form 3-carboxy-3-hydroxy-4-methylpentanoate (2-isopropylmalate). The protein is 2-isopropylmalate synthase of Nitratidesulfovibrio vulgaris (strain DSM 19637 / Miyazaki F) (Desulfovibrio vulgaris).